Here is a 597-residue protein sequence, read N- to C-terminus: MQHIRNFSIIAHIDHGKSTLADRLIHRCGGLAEREMSAQVLDSMDIERERGITIKAQTASLQYKSQDGTVYNLNLIDTPGHVDFSYEVSRSLSACEGALLVVDASQGVEAQTVANCYTAIELGVEVLPVLNKMDLPQADPEAARQEVEDVIGIDASEAVLASAKTGMGIDEILESIVARVPPPKGDPSAPLQALIIDSWFDNYVGVVMLVRIVNGVLKPKDKILLMASHATHLCEQIGVFTPKSQPRPELSAGEVGFVIAGIKELEHAKVGDTITLAGKPAAEPLPGFKEVKPQVFAGLYPVESSEYDQLRDSLEKLKLNDAALMFEPEVSQALGFGFRCGFLGLLHMEIVQERLEREFDMDIITTAPSVVYEVEQRDGTVVTIESPSRMPEIAKIADIREPIVKVTLFMPQEYVGPVMTLCNNKRGVQLNMSYHGRQVHLTYEIPLAEIVLDFFDKLKSVSRGYASMDYEFVEYRSADVVKVDLLINGDRVDALAMIAHRNNARYRAREVVSRMRGLIPRQMFDVAIQAAIGAEVIARENVKALRKNVLAKCYGGDISRKKKLLEKQKAGKKRMKQVGSVEIPQEAFLAILQVEDK.

One can recognise a tr-type G domain in the interval 2–184 (QHIRNFSIIA…SIVARVPPPK (183 aa)). Residues 14-19 (DHGKST) and 131-134 (NKMD) each bind GTP.

Belongs to the TRAFAC class translation factor GTPase superfamily. Classic translation factor GTPase family. LepA subfamily.

It is found in the cell inner membrane. The enzyme catalyses GTP + H2O = GDP + phosphate + H(+). Required for accurate and efficient protein synthesis under certain stress conditions. May act as a fidelity factor of the translation reaction, by catalyzing a one-codon backward translocation of tRNAs on improperly translocated ribosomes. Back-translocation proceeds from a post-translocation (POST) complex to a pre-translocation (PRE) complex, thus giving elongation factor G a second chance to translocate the tRNAs correctly. Binds to ribosomes in a GTP-dependent manner. This Bordetella bronchiseptica (strain ATCC BAA-588 / NCTC 13252 / RB50) (Alcaligenes bronchisepticus) protein is Elongation factor 4.